Reading from the N-terminus, the 223-residue chain is MEVKDILKTVDHTLLATTATWPEIQTILDDAMAYETASACIPASYVKKAAEYVSGKLAICTVIGFPNGYSTTAAKVFECQDAIKNGADEIDMVINLTDVKNGDFDTVEEEIRQIKAACQDHILKVIVETCQLTKEELIELCGVVTRSGADFIKTSTGFSTAGATFEDVEVMAKYVGEGVKIKAAGGISSLEDAEKFIALGASRLGTSRIIKIVKNQKVEEGTY.

The active-site Proton donor/acceptor is the Asp91. Residue Lys153 is the Schiff-base intermediate with acetaldehyde of the active site. The Proton donor/acceptor role is filled by Lys182.

The protein belongs to the DeoC/FbaB aldolase family. DeoC type 1 subfamily.

The protein localises to the cytoplasm. It carries out the reaction 2-deoxy-D-ribose 5-phosphate = D-glyceraldehyde 3-phosphate + acetaldehyde. Its pathway is carbohydrate degradation; 2-deoxy-D-ribose 1-phosphate degradation; D-glyceraldehyde 3-phosphate and acetaldehyde from 2-deoxy-alpha-D-ribose 1-phosphate: step 2/2. Catalyzes a reversible aldol reaction between acetaldehyde and D-glyceraldehyde 3-phosphate to generate 2-deoxy-D-ribose 5-phosphate. The polypeptide is Deoxyribose-phosphate aldolase (Streptococcus agalactiae serotype V (strain ATCC BAA-611 / 2603 V/R)).